Reading from the N-terminus, the 197-residue chain is Na(+)-translocating NADH-quinone reductase subunit E (197 aa).

The next 6 helical transmembrane spans lie at serine 11–valine 31, valine 35–alanine 55, phenylalanine 76–phenylalanine 96, leucine 108–methionine 128, valine 139–isoleucine 159, and leucine 175–isoleucine 195.

This sequence belongs to the NqrDE/RnfAE family. Composed of six subunits; NqrA, NqrB, NqrC, NqrD, NqrE and NqrF.

Its subcellular location is the cell inner membrane. It catalyses the reaction a ubiquinone + n Na(+)(in) + NADH + H(+) = a ubiquinol + n Na(+)(out) + NAD(+). Functionally, NQR complex catalyzes the reduction of ubiquinone-1 to ubiquinol by two successive reactions, coupled with the transport of Na(+) ions from the cytoplasm to the periplasm. NqrA to NqrE are probably involved in the second step, the conversion of ubisemiquinone to ubiquinol. The protein is Na(+)-translocating NADH-quinone reductase subunit E of Neisseria meningitidis serogroup A / serotype 4A (strain DSM 15465 / Z2491).